The following is a 157-amino-acid chain: 2-C-methyl-D-erythritol 2,4-cyclodiphosphate synthase (157 aa).

Positions 8 and 10 each coordinate a divalent metal cation. Residues 8 to 10 and 34 to 35 each bind 4-CDP-2-C-methyl-D-erythritol 2-phosphate; these read DVH and HS. His42 is an a divalent metal cation binding site. Residues 56–58, 61–65, 100–106, 132–135, Phe139, and Arg142 contribute to the 4-CDP-2-C-methyl-D-erythritol 2-phosphate site; these read DIG, FPDTD, AQAPKMA, and TTTE.

The protein belongs to the IspF family. Homotrimer. The cofactor is a divalent metal cation.

It carries out the reaction 4-CDP-2-C-methyl-D-erythritol 2-phosphate = 2-C-methyl-D-erythritol 2,4-cyclic diphosphate + CMP. It functions in the pathway isoprenoid biosynthesis; isopentenyl diphosphate biosynthesis via DXP pathway; isopentenyl diphosphate from 1-deoxy-D-xylulose 5-phosphate: step 4/6. Involved in the biosynthesis of isopentenyl diphosphate (IPP) and dimethylallyl diphosphate (DMAPP), two major building blocks of isoprenoid compounds. Catalyzes the conversion of 4-diphosphocytidyl-2-C-methyl-D-erythritol 2-phosphate (CDP-ME2P) to 2-C-methyl-D-erythritol 2,4-cyclodiphosphate (ME-CPP) with a corresponding release of cytidine 5-monophosphate (CMP). This chain is 2-C-methyl-D-erythritol 2,4-cyclodiphosphate synthase, found in Serratia proteamaculans (strain 568).